The primary structure comprises 425 residues: Testicular acid phosphatase (425 aa).

The first 27 residues, Met-1–Pro-27, serve as a signal peptide directing secretion. Residues Glu-28–Pro-392 lie on the Extracellular side of the membrane. The Nucleophile role is filled by His-40. Cystine bridges form between Cys-158–Cys-378, Cys-213–Cys-311, and Cys-353–Cys-357. Asp-288 (proton donor) is an active-site residue. The helical transmembrane segment at Leu-393 to Trp-413 threads the bilayer. Residues Arg-414–Val-425 are Cytoplasmic-facing.

Belongs to the histidine acid phosphatase family. Homodimer. Post-translationally, glycosylated.

Its subcellular location is the membrane. The catalysed reaction is a phosphate monoester + H2O = an alcohol + phosphate. May dephosphorylate receptor tyrosine-protein kinase ERBB4 and inhibits its ligand-induced proteolytic cleavage. May play a role in odontogenesis. In Mus musculus (Mouse), this protein is Testicular acid phosphatase.